We begin with the raw amino-acid sequence, 324 residues long: NADH-ubiquinone oxidoreductase chain 1 (324 aa).

The next 8 helical transmembrane spans lie at 3–23 (LLFMYLLPLLYIAPILLAVAF), 73–93 (LLFILAPTLALALAMIMWTPF), 106–126 (ILFILAISSLTVYTILGSGWA), 151–171 (ALIILCSVLLAGGFTLSAFAI), 175–195 (FTWFILPLWPMFLMWFVSTLA), 226–246 (LFFLAEYANILMMNTLSTIIF), 255–275 (TLTTSLLMTKASILSLCFLWV), and 295–315 (FLPLTLALVILYVSMPISLLF).

Belongs to the complex I subunit 1 family.

It localises to the mitochondrion inner membrane. It carries out the reaction a ubiquinone + NADH + 5 H(+)(in) = a ubiquinol + NAD(+) + 4 H(+)(out). Core subunit of the mitochondrial membrane respiratory chain NADH dehydrogenase (Complex I) that is believed to belong to the minimal assembly required for catalysis. Complex I functions in the transfer of electrons from NADH to the respiratory chain. The immediate electron acceptor for the enzyme is believed to be ubiquinone. The polypeptide is NADH-ubiquinone oxidoreductase chain 1 (MT-ND1) (Aquarana catesbeiana (American bullfrog)).